We begin with the raw amino-acid sequence, 305 residues long: Protoheme IX farnesyltransferase (305 aa).

9 consecutive transmembrane segments (helical) span residues 31–51 (IQVLLLITTAGAMWIAGKGHV), 53–73 (PLLLLVTLLGGTLAASSANAF), 98–118 (ILPWQAALFATALGVASFAVL), 124–144 (LFAALLAISGIGFYVVIYTLW), 153–173 (IVIGGAAGAIPPLVGWAAVTG), 181–201 (VLFGIIFMWTPPHFWALAMMI), 221–241 (ATARQIFIYTLVLVPVTLVLY), 242–262 (PLGTMGWIYLLAAGALGLWLI), and 285–305 (SIFYLMLLFVAMGIDSIFLFA).

The protein belongs to the UbiA prenyltransferase family. Protoheme IX farnesyltransferase subfamily.

It localises to the cell inner membrane. The enzyme catalyses heme b + (2E,6E)-farnesyl diphosphate + H2O = Fe(II)-heme o + diphosphate. It functions in the pathway porphyrin-containing compound metabolism; heme O biosynthesis; heme O from protoheme: step 1/1. Its function is as follows. Converts heme B (protoheme IX) to heme O by substitution of the vinyl group on carbon 2 of heme B porphyrin ring with a hydroxyethyl farnesyl side group. This Gloeobacter violaceus (strain ATCC 29082 / PCC 7421) protein is Protoheme IX farnesyltransferase.